We begin with the raw amino-acid sequence, 125 residues long: Large ribosomal subunit protein bL12 (125 aa).

The disordered stretch occupies residues 96-125 (PAPVKEGATKDEAEEIKKKIEEAGGTAELK). Positions 102-117 (GATKDEAEEIKKKIEE) are enriched in basic and acidic residues.

Belongs to the bacterial ribosomal protein bL12 family. As to quaternary structure, homodimer. Part of the ribosomal stalk of the 50S ribosomal subunit. Forms a multimeric L10(L12)X complex, where L10 forms an elongated spine to which 2 to 4 L12 dimers bind in a sequential fashion. Binds GTP-bound translation factors.

Its function is as follows. Forms part of the ribosomal stalk which helps the ribosome interact with GTP-bound translation factors. Is thus essential for accurate translation. This chain is Large ribosomal subunit protein bL12, found in Alcanivorax borkumensis (strain ATCC 700651 / DSM 11573 / NCIMB 13689 / SK2).